The primary structure comprises 343 residues: Methionine import ATP-binding protein MetN (343 aa).

An ABC transporter domain is found at 2–241 (IKLFHINKIF…PKTPIAQAFI (240 aa)). 38–45 (GSSGAGKS) contributes to the ATP binding site.

The protein belongs to the ABC transporter superfamily. Methionine importer (TC 3.A.1.24) family. In terms of assembly, the complex is composed of two ATP-binding proteins (MetN), two transmembrane proteins (MetI) and a solute-binding protein (MetQ).

It localises to the cell inner membrane. It carries out the reaction L-methionine(out) + ATP + H2O = L-methionine(in) + ADP + phosphate + H(+). The catalysed reaction is D-methionine(out) + ATP + H2O = D-methionine(in) + ADP + phosphate + H(+). Its function is as follows. Part of the ABC transporter complex MetNIQ involved in methionine import. Responsible for energy coupling to the transport system. The protein is Methionine import ATP-binding protein MetN of Photorhabdus laumondii subsp. laumondii (strain DSM 15139 / CIP 105565 / TT01) (Photorhabdus luminescens subsp. laumondii).